The following is a 167-amino-acid chain: UPF0179 protein PAE0681 (167 aa).

A disordered region spans residues 142 to 167 (PSPSGSSISATSQGPSRAPPSRRLLK). Low complexity predominate over residues 145 to 157 (SGSSISATSQGPS).

The protein belongs to the UPF0179 family.

The protein is UPF0179 protein PAE0681 of Pyrobaculum aerophilum (strain ATCC 51768 / DSM 7523 / JCM 9630 / CIP 104966 / NBRC 100827 / IM2).